The chain runs to 2476 residues: Non-reducing polyketide synthase pkdA (2476 aa).

Residues 22–230 (PNLNDAYLQS…VISEARLATL (209 aa)) form an N-terminal acylcarrier protein transacylase domain (SAT) region. Cys-142 (nucleophile; for transacylase activity) is an active-site residue. His-261 functions as the Proton donor/acceptor; for transacylase activity in the catalytic mechanism. A Ketosynthase family 3 (KS3) domain is found at 388-805 (DESIAVVGMA…GSNASLVVTQ (418 aa)). Active-site for beta-ketoacyl synthase activity residues include Cys-554, His-689, and His-728. The segment at 919–1204 (FGGQRSSFVG…GSGVTNLASR (286 aa)) is malonyl-CoA:ACP transacylase (MAT). The interval 1290–1417 (QKGLWTFVGY…GRITFQTPKQ (128 aa)) is N-terminal hotdog fold. The region spanning 1290-1592 (QKGLWTFVGY…FVEVSIAGMS (303 aa)) is the PKS/mFAS DH domain. The interval 1321–1590 (YVSAHVIAQT…LHFVEVSIAG (270 aa)) is product template (PT) domain. The active-site Proton acceptor; for dehydratase activity is the His-1325. Residues 1445-1592 (QTIQGSRNIY…FVEVSIAGMS (148 aa)) are C-terminal hotdog fold. The Proton donor; for dehydratase activity role is filled by Asp-1501. The tract at residues 1626–1649 (DVSKNEKDAKAPSKKKESTSKSPG) is disordered. Positions 1650–1724 (HDILARVRTL…SLVKCIGANM (75 aa)) constitute a Carrier domain. At Ser-1684 the chain carries O-(pantetheine 4'-phosphoryl)serine. Positions 1727–1766 (SDTSRTGDDSSDDLETASAESETSSGINNEDSHNIDRQQI) are disordered. Low complexity predominate over residues 1742–1751 (TASAESETSS). The methyltransferase (CMeT) domain stretch occupies residues 1881 to 2030 (ELLRQYPEHA…DCEKTPSSHL (150 aa)). The segment at 2094-2340 (VTGATGSLGS…SWCPVDDVAA (247 aa)) is NADPH-binding domain.

Pantetheine 4'-phosphate serves as cofactor.

It catalyses the reaction propanoyl-CoA + 3 malonyl-CoA + AH2 + 2 S-adenosyl-L-methionine + H(+) = 2-ethyl-4,6-dihydroxy-3,5-dimethylbenzaldehyde + A + 2 S-adenosyl-L-homocysteine + 3 CO2 + 4 CoA + H2O. The protein operates within secondary metabolite biosynthesis. Non-reducing polyketide synthase that synthesizes 6-ethyl-2,4-dihydroxy-3,5-dimethylbenzaldehyde via condensation of one propanoyl-CoA starter unit with 3 malonyl-CoA units, as well as 2 methylation steps. This Emericella nidulans (strain FGSC A4 / ATCC 38163 / CBS 112.46 / NRRL 194 / M139) (Aspergillus nidulans) protein is Non-reducing polyketide synthase pkdA.